We begin with the raw amino-acid sequence, 349 residues long: MTPYDDSPAQAVSTAPRTTGPSLIDGFGRAVTYLRVSVTDRCDLRCVYCMAEHMTFLPKAEVLTLEELDRLASTFVGLGVRKLRLTGGEPLVRKGFIGLVARLSRHLSSGALDELTLTTNGSQLERYASDLARHGVRRINVSLDTLKPALFRALTRGGDVTRVIAGIDAAQAAGMTVKINAVALKHDNAGEIPALIQWAHGRGCDITLIETMPLGEVDQDRTDQFLSLQDVRRDLSSFWTLTDIPDSTGGPARYVHVAETGGRLGLITPLSNHFCDTCNRVRLTCTGTLHTCLGRDDASDLRAEIRRGASDAELVDAIHLAIGAKPKGHDFQIAAAQPAVARHMSTTGG.

A Radical SAM core domain is found at 26–245 (GFGRAVTYLR…SSFWTLTDIP (220 aa)). Arg-35 provides a ligand contact to GTP. Residues Cys-42 and Cys-46 each coordinate [4Fe-4S] cluster. Tyr-48 is a binding site for S-adenosyl-L-methionine. Position 49 (Cys-49) interacts with [4Fe-4S] cluster. Arg-84 is a GTP binding site. Residue Gly-88 coordinates S-adenosyl-L-methionine. Thr-118 is a binding site for GTP. Position 142 (Ser-142) interacts with S-adenosyl-L-methionine. Lys-178 contributes to the GTP binding site. Met-212 serves as a coordination point for S-adenosyl-L-methionine. [4Fe-4S] cluster-binding residues include Cys-275 and Cys-278. Position 280–282 (280–282 (RVR)) interacts with GTP. Position 292 (Cys-292) interacts with [4Fe-4S] cluster.

Belongs to the radical SAM superfamily. MoaA family. As to quaternary structure, monomer and homodimer. The cofactor is [4Fe-4S] cluster.

It catalyses the reaction GTP + AH2 + S-adenosyl-L-methionine = (8S)-3',8-cyclo-7,8-dihydroguanosine 5'-triphosphate + 5'-deoxyadenosine + L-methionine + A + H(+). The protein operates within cofactor biosynthesis; molybdopterin biosynthesis. Catalyzes the cyclization of GTP to (8S)-3',8-cyclo-7,8-dihydroguanosine 5'-triphosphate. The protein is GTP 3',8-cyclase of Caulobacter vibrioides (strain ATCC 19089 / CIP 103742 / CB 15) (Caulobacter crescentus).